A 102-amino-acid chain; its full sequence is Small ribosomal subunit protein uS10 (102 aa).

The disordered stretch occupies residues 35 to 58; that stretch reads SGPIPLPTKTLEIPSRKSPDGEGT.

The protein belongs to the universal ribosomal protein uS10 family. In terms of assembly, part of the 30S ribosomal subunit.

Functionally, involved in the binding of tRNA to the ribosomes. The polypeptide is Small ribosomal subunit protein uS10 (Halorubrum lacusprofundi (strain ATCC 49239 / DSM 5036 / JCM 8891 / ACAM 34)).